Reading from the N-terminus, the 506-residue chain is tRNA-2-methylthio-N(6)-dimethylallyladenosine synthase (506 aa).

The MTTase N-terminal domain occupies 14–132 (KSYEVRTYGC…LPVLLERARV (119 aa)). Residues Cys23, Cys61, Cys95, Cys169, Cys173, and Cys176 each contribute to the [4Fe-4S] cluster site. Residues 155-386 (RESAYAAWVS…ALQEQISWDE (232 aa)) enclose the Radical SAM core domain. A TRAM domain is found at 388–456 (KKQVGRTLDV…PHHLLAEGTP (69 aa)).

This sequence belongs to the methylthiotransferase family. MiaB subfamily. Monomer. [4Fe-4S] cluster serves as cofactor.

Its subcellular location is the cytoplasm. It carries out the reaction N(6)-dimethylallyladenosine(37) in tRNA + (sulfur carrier)-SH + AH2 + 2 S-adenosyl-L-methionine = 2-methylsulfanyl-N(6)-dimethylallyladenosine(37) in tRNA + (sulfur carrier)-H + 5'-deoxyadenosine + L-methionine + A + S-adenosyl-L-homocysteine + 2 H(+). Catalyzes the methylthiolation of N6-(dimethylallyl)adenosine (i(6)A), leading to the formation of 2-methylthio-N6-(dimethylallyl)adenosine (ms(2)i(6)A) at position 37 in tRNAs that read codons beginning with uridine. This chain is tRNA-2-methylthio-N(6)-dimethylallyladenosine synthase, found in Streptomyces griseus subsp. griseus (strain JCM 4626 / CBS 651.72 / NBRC 13350 / KCC S-0626 / ISP 5235).